Reading from the N-terminus, the 224-residue chain is 7-cyano-7-deazaguanine synthase (224 aa).

10-20 (FSGGQDSTTCL) is a binding site for ATP. 4 residues coordinate Zn(2+): Cys193, Cys201, Cys204, and Cys207.

The protein belongs to the QueC family. Zn(2+) serves as cofactor.

The catalysed reaction is 7-carboxy-7-deazaguanine + NH4(+) + ATP = 7-cyano-7-deazaguanine + ADP + phosphate + H2O + H(+). The protein operates within purine metabolism; 7-cyano-7-deazaguanine biosynthesis. Catalyzes the ATP-dependent conversion of 7-carboxy-7-deazaguanine (CDG) to 7-cyano-7-deazaguanine (preQ(0)). The protein is 7-cyano-7-deazaguanine synthase of Neisseria gonorrhoeae (strain ATCC 700825 / FA 1090).